The primary structure comprises 47 residues: Large ribosomal subunit protein bL34 (47 aa).

It belongs to the bacterial ribosomal protein bL34 family.

The protein is Large ribosomal subunit protein bL34 of Rhodococcus opacus (strain B4).